Consider the following 308-residue polypeptide: UDP-N-acetylenolpyruvoylglucosamine reductase (308 aa).

The region spanning Val32 to Gly196 is the FAD-binding PCMH-type domain. Arg176 is an active-site residue. Ser225 acts as the Proton donor in catalysis. Glu296 is an active-site residue.

It belongs to the MurB family. FAD serves as cofactor.

Its subcellular location is the cytoplasm. It carries out the reaction UDP-N-acetyl-alpha-D-muramate + NADP(+) = UDP-N-acetyl-3-O-(1-carboxyvinyl)-alpha-D-glucosamine + NADPH + H(+). It participates in cell wall biogenesis; peptidoglycan biosynthesis. Cell wall formation. The sequence is that of UDP-N-acetylenolpyruvoylglucosamine reductase from Legionella pneumophila (strain Corby).